Here is a 138-residue protein sequence, read N- to C-terminus: Lymphocyte antigen 6L (138 aa).

The N-terminal stretch at 1–16 (MERLVLTLCTLPLAVA) is a signal peptide. N-linked (GlcNAc...) asparagine glycosylation is present at asparagine 27. The region spanning 28-122 (LSCYQCFKVS…TPQEGRWALR (95 aa)) is the UPAR/Ly6 domain. Cystine bridges form between cysteine 30/cysteine 47 and cysteine 103/cysteine 108. A lipid anchor (GPI-anchor amidated glycine) is attached at glycine 117. Positions 118–138 (RWALRGGLLLQVGLSLLRALL) are cleaved as a propeptide — removed in mature form.

The protein localises to the cell membrane. In Homo sapiens (Human), this protein is Lymphocyte antigen 6L.